Reading from the N-terminus, the 502-residue chain is 4,4'-diaponeurosporene oxygenase (502 aa).

An FAD-binding site is contributed by 8 to 20 (IIGGGLGGISAAI).

Belongs to the carotenoid/retinoid oxidoreductase family. CrtP subfamily. FAD serves as cofactor.

It carries out the reaction all-trans-4,4'-diaponeurosporene + 2 AH2 + 2 O2 = 4,4'-diaponeurosporenal + 2 A + 3 H2O. It participates in carotenoid biosynthesis; staphyloxanthin biosynthesis; staphyloxanthin from farnesyl diphosphate: step 3/5. Involved in the biosynthesis of the yellow-orange carotenoid staphyloxanthin, which plays a role in the virulence via its protective function against oxidative stress. Catalyzes the oxidation of the terminal methyl side group of 4,4'-diaponeurosporene to form 4,4'-diaponeurosporen-4-al. The sequence is that of 4,4'-diaponeurosporene oxygenase from Staphylococcus haemolyticus (strain JCSC1435).